A 245-amino-acid polypeptide reads, in one-letter code: Thiopurine S-methyltransferase (245 aa).

Trp-29–Phe-40 contributes to the S-adenosyl-L-methionine binding site. Position 40 (Phe-40) interacts with substrate. Lys-58 is modified (N6-acetyllysine). S-adenosyl-L-methionine contacts are provided by residues Leu-69, Glu-90, Ser-134 to Ile-135, and Arg-152.

This sequence belongs to the class I-like SAM-binding methyltransferase superfamily. TPMT family. As to quaternary structure, monomer.

It is found in the cytoplasm. The enzyme catalyses S-adenosyl-L-methionine + a thiopurine = S-adenosyl-L-homocysteine + a thiopurine S-methylether.. This Oryctolagus cuniculus (Rabbit) protein is Thiopurine S-methyltransferase (TPMT).